We begin with the raw amino-acid sequence, 637 residues long: MNEQVIVQRDPHEPLKTDKREKNWAQHAELIAALVSGALILAGWLLSGYQVLSIILFLLAFVIGGFAKAKEGIEETLESKTLNVELLMIFAAIGSALIGYWAEGAILIFIFSLSGALETYTMNKSSRDLTSLMQLEPEEATLMVNGETKRVPVSDLQAGDMIVIKPGERVAADGIIESGSTSLDESALTGESMPVEKNTGDTVFTGTVNRNGSLTVRVTKANEDSLFRKIIKLVESAQNSVSPAQAFIERFENAYVKGVLIAVALLLFVPHFALGWSWSETFYRAMVFMVVASPCALVASIMPAALSLISNGARNGMLVKGSVFLEQLGSVQMIAFDKTGTVTKGQPAVETIRIAEGFSEAEVLEAVYAIETQSSHPLAQAITAYAESRGVNQSGYISIEETSGFGVMAEVSGAKWKVGKAGFIGEEMAAQFMKQTASDVIQSGHTIVFVKKDDQIAGCIALKDQIRPEAKEVMEELNRLGIKTAMLTGDHEDTAQAIAKEAGMTTVVAECLPDQKVNEIKRLKEEFGTIAMVGDGINDAPALKAADVGIAMGGGTDVALETADMVLMKNDLKKLVNMCRLSRKMNRIIKQNIVFSLAVICLLICANFLQAMELPFGVIGHEGSTILVILNGLRLLK.

4 helical membrane passes run 43 to 63 (GWLL…AFVI), 89 to 109 (IFAA…ILIF), 258 to 278 (GVLI…GWSW), and 286 to 306 (MVFM…PAAL). D337 serves as the catalytic 4-aspartylphosphate intermediate. Mg(2+) contacts are provided by D535 and D539. The chain crosses the membrane as a helical span at residues 599–619 (VICLLICANFLQAMELPFGVI).

It belongs to the cation transport ATPase (P-type) (TC 3.A.3) family. Type IB subfamily.

Its subcellular location is the cell membrane. It carries out the reaction Zn(2+)(out) + ATP(in) + H2O(in) = Zn(2+)(in) + ADP(in) + phosphate(in) + H(+)(in). In terms of biological role, couples the hydrolysis of ATP with the transport of zinc into the cell. Plays an important role in protecting cells against oxidative stress. ZosA-mediated zinc transport is required for post-transcriptional control of comK and competence development. The chain is Zinc-transporting ATPase (zosA) from Bacillus subtilis (strain 168).